The sequence spans 81 residues: MNPIISAASVIAAGLAVGLASIGPGIGQGTAAGQAVEGIARQPEAEDKIRGTLLLSLAFMEALTIYGLVVALALLFANPFV.

The next 2 membrane-spanning stretches (helical) occupy residues 3-23 (PIIS…ASIG) and 57-77 (LAFM…LLFA).

Belongs to the ATPase C chain family. F-type ATPases have 2 components, F(1) - the catalytic core - and F(0) - the membrane proton channel. F(1) has five subunits: alpha(3), beta(3), gamma(1), delta(1), epsilon(1). F(0) has four main subunits: a(1), b(1), b'(1) and c(10-14). The alpha and beta chains form an alternating ring which encloses part of the gamma chain. F(1) is attached to F(0) by a central stalk formed by the gamma and epsilon chains, while a peripheral stalk is formed by the delta, b and b' chains.

Its subcellular location is the plastid. It is found in the chloroplast thylakoid membrane. Its function is as follows. F(1)F(0) ATP synthase produces ATP from ADP in the presence of a proton or sodium gradient. F-type ATPases consist of two structural domains, F(1) containing the extramembraneous catalytic core and F(0) containing the membrane proton channel, linked together by a central stalk and a peripheral stalk. During catalysis, ATP synthesis in the catalytic domain of F(1) is coupled via a rotary mechanism of the central stalk subunits to proton translocation. Key component of the F(0) channel; it plays a direct role in translocation across the membrane. A homomeric c-ring of between 10-14 subunits forms the central stalk rotor element with the F(1) delta and epsilon subunits. This Cicer arietinum (Chickpea) protein is ATP synthase subunit c, chloroplastic.